The primary structure comprises 469 residues: Uronate isomerase (469 aa).

The protein belongs to the metallo-dependent hydrolases superfamily. Uronate isomerase family.

The enzyme catalyses D-glucuronate = D-fructuronate. It carries out the reaction aldehydo-D-galacturonate = keto-D-tagaturonate. It functions in the pathway carbohydrate metabolism; pentose and glucuronate interconversion. This chain is Uronate isomerase, found in Corynebacterium efficiens (strain DSM 44549 / YS-314 / AJ 12310 / JCM 11189 / NBRC 100395).